Reading from the N-terminus, the 74-residue chain is U6-agatoxin-Ao1a (74 aa).

The signal sequence occupies residues 1 to 19; sequence MRFYIAFFFLLLAADMALS. Positions 20–30 are excised as a propeptide; the sequence is FEIGNSEELER. Cystine bridges form between cysteine 44-cysteine 56, cysteine 49-cysteine 61, and cysteine 55-cysteine 72.

Expressed by the venom gland.

It localises to the secreted. This is U6-agatoxin-Ao1a from Agelena orientalis (Funnel-web spider).